We begin with the raw amino-acid sequence, 203 residues long: Glycerol-3-phosphate acyltransferase (203 aa).

5 consecutive transmembrane segments (helical) span residues 10–30, 59–79, 87–107, 116–136, and 160–180; these read MLILWAVIGYGLGSIPFGLIL, GAAALTLLLDGGKGAVAVLLA, AAQVAALAAFVGHCYPIWLGF, FLGLWLALAWPVGVACCLSWL, and LVLLDQGAGFVLGIVLTLMVF.

The protein belongs to the PlsY family. In terms of assembly, probably interacts with PlsX.

The protein resides in the cell inner membrane. The catalysed reaction is an acyl phosphate + sn-glycerol 3-phosphate = a 1-acyl-sn-glycero-3-phosphate + phosphate. It functions in the pathway lipid metabolism; phospholipid metabolism. In terms of biological role, catalyzes the transfer of an acyl group from acyl-phosphate (acyl-PO(4)) to glycerol-3-phosphate (G3P) to form lysophosphatidic acid (LPA). This enzyme utilizes acyl-phosphate as fatty acyl donor, but not acyl-CoA or acyl-ACP. This chain is Glycerol-3-phosphate acyltransferase, found in Ruegeria pomeroyi (strain ATCC 700808 / DSM 15171 / DSS-3) (Silicibacter pomeroyi).